The following is a 296-amino-acid chain: MKNEKIVVLYGGDSPEREVSLKSGKAVLDSLISQGYDAVGVDASGKELVAKLLELKPDKCFVALHGEDGENGRVSALLEMLEIKHTSSSMKSSVITMDKMISKEILMHYRMPTPMAKFLTDKLVAEDEISFPVAVKPSSGGSSIATFKVKSIQELKHAYEEASKYGEVMIEQWVTGKEITVAIVNDEVYSSVWIEPQNEFYDYESKYSGKSIYHSPSGLCEQKELEVRQLAKKAYDLLGCSGHARVDFIYDDRGNFYIMEINSSPGMTDNSLSPKSAAAEGVDFDSFVKRIIEQAQ.

Residues Lys103–Glu293 enclose the ATP-grasp domain. Ile129 to Thr180 provides a ligand contact to ATP. Positions 247, 260, and 262 each coordinate Mg(2+).

Belongs to the D-alanine--D-alanine ligase family. It depends on Mg(2+) as a cofactor. Mn(2+) serves as cofactor.

The protein localises to the cytoplasm. The catalysed reaction is 2 D-alanine + ATP = D-alanyl-D-alanine + ADP + phosphate + H(+). It participates in cell wall biogenesis; peptidoglycan biosynthesis. Functionally, cell wall formation. This chain is D-alanine--D-alanine ligase, found in Francisella tularensis subsp. tularensis (strain WY96-3418).